A 166-amino-acid chain; its full sequence is NADPH-dependent 7-cyano-7-deazaguanine reductase (166 aa).

The Thioimide intermediate role is filled by C57. D64 serves as the catalytic Proton donor. Substrate is bound by residues 79–81 and 98–99; these read VES and HE.

Belongs to the GTP cyclohydrolase I family. QueF type 1 subfamily.

It is found in the cytoplasm. It catalyses the reaction 7-aminomethyl-7-carbaguanine + 2 NADP(+) = 7-cyano-7-deazaguanine + 2 NADPH + 3 H(+). It functions in the pathway tRNA modification; tRNA-queuosine biosynthesis. Functionally, catalyzes the NADPH-dependent reduction of 7-cyano-7-deazaguanine (preQ0) to 7-aminomethyl-7-deazaguanine (preQ1). This is NADPH-dependent 7-cyano-7-deazaguanine reductase from Staphylococcus aureus (strain JH1).